The primary structure comprises 297 residues: HTH-type transcriptional regulator ArgP (297 aa).

The region spanning 4-60 (PDYRTLQALDAVIRERGFERAAQKLCITQSAVSQRIKQLENLFGQPLLVRTIPPRPT) is the HTH lysR-type domain. Residues 21-40 (FERAAQKLCITQSAVSQRIK) constitute a DNA-binding region (H-T-H motif).

The protein belongs to the LysR transcriptional regulatory family. Homodimer.

Its function is as follows. Controls the transcription of genes involved in arginine and lysine metabolism. This is HTH-type transcriptional regulator ArgP from Pectobacterium carotovorum subsp. carotovorum (strain PC1).